Here is a 937-residue protein sequence, read N- to C-terminus: Isoleucine--tRNA ligase (937 aa).

The short motif at 57 to 67 (PYANGPIHMGH) is the 'HIGH' region element. Residue Glu556 coordinates L-isoleucyl-5'-AMP. Positions 597-601 (KMSKS) match the 'KMSKS' region motif. Lys600 is an ATP binding site. Zn(2+) is bound by residues Cys895, Cys898, Cys915, and Cys918.

The protein belongs to the class-I aminoacyl-tRNA synthetase family. IleS type 1 subfamily. As to quaternary structure, monomer. Zn(2+) serves as cofactor.

It is found in the cytoplasm. The catalysed reaction is tRNA(Ile) + L-isoleucine + ATP = L-isoleucyl-tRNA(Ile) + AMP + diphosphate. Functionally, catalyzes the attachment of isoleucine to tRNA(Ile). As IleRS can inadvertently accommodate and process structurally similar amino acids such as valine, to avoid such errors it has two additional distinct tRNA(Ile)-dependent editing activities. One activity is designated as 'pretransfer' editing and involves the hydrolysis of activated Val-AMP. The other activity is designated 'posttransfer' editing and involves deacylation of mischarged Val-tRNA(Ile). The protein is Isoleucine--tRNA ligase of Levilactobacillus brevis (strain ATCC 367 / BCRC 12310 / CIP 105137 / JCM 1170 / LMG 11437 / NCIMB 947 / NCTC 947) (Lactobacillus brevis).